A 503-amino-acid chain; its full sequence is Lanosterol 14-alpha demethylase (503 aa).

Residues 24–44 (GNLLSTLLIACAFTLSLVYLF) traverse the membrane as a helical segment. Cys449 is a heme binding site.

This sequence belongs to the cytochrome P450 family. The cofactor is heme. Post-translationally, ubiquitinated by MARCHF6, leading to proteasomal degradation.

It is found in the endoplasmic reticulum membrane. Its subcellular location is the microsome membrane. The catalysed reaction is a 14alpha-methyl steroid + 3 reduced [NADPH--hemoprotein reductase] + 3 O2 = a Delta(14) steroid + formate + 3 oxidized [NADPH--hemoprotein reductase] + 4 H2O + 4 H(+). It carries out the reaction lanosterol + 3 reduced [NADPH--hemoprotein reductase] + 3 O2 = 4,4-dimethyl-5alpha-cholesta-8,14,24-trien-3beta-ol + formate + 3 oxidized [NADPH--hemoprotein reductase] + 4 H2O + 4 H(+). It catalyses the reaction 24,25-dihydrolanosterol + 3 reduced [NADPH--hemoprotein reductase] + 3 O2 = 4,4-dimethyl-8,14-cholestadien-3beta-ol + formate + 3 oxidized [NADPH--hemoprotein reductase] + 4 H2O + 4 H(+). The enzyme catalyses a 14alpha-methyl steroid + reduced [NADPH--hemoprotein reductase] + O2 = a 14alpha-hydroxymethyl steroid + oxidized [NADPH--hemoprotein reductase] + H2O + H(+). The catalysed reaction is a 14alpha-hydroxymethyl steroid + reduced [NADPH--hemoprotein reductase] + O2 = a 14alpha-formyl steroid + oxidized [NADPH--hemoprotein reductase] + 2 H2O + H(+). It carries out the reaction a 14alpha-formyl steroid + reduced [NADPH--hemoprotein reductase] + O2 = a Delta(14) steroid + formate + oxidized [NADPH--hemoprotein reductase] + H2O + 2 H(+). It catalyses the reaction lanosterol + reduced [NADPH--hemoprotein reductase] + O2 = 32-hydroxylanosterol + oxidized [NADPH--hemoprotein reductase] + H2O + H(+). The enzyme catalyses 32-hydroxylanosterol + reduced [NADPH--hemoprotein reductase] + O2 = 32-oxolanosterol + oxidized [NADPH--hemoprotein reductase] + 2 H2O + H(+). The catalysed reaction is 32-oxolanosterol + reduced [NADPH--hemoprotein reductase] + O2 = 4,4-dimethyl-5alpha-cholesta-8,14,24-trien-3beta-ol + formate + oxidized [NADPH--hemoprotein reductase] + H2O + 2 H(+). It carries out the reaction 24,25-dihydrolanosterol + reduced [NADPH--hemoprotein reductase] + O2 = 32-hydroxy-24,25-dihydrolanosterol + oxidized [NADPH--hemoprotein reductase] + H2O + H(+). It catalyses the reaction 32-hydroxy-24,25-dihydrolanosterol + reduced [NADPH--hemoprotein reductase] + O2 = 32-oxo-24,25-dihydrolanosterol + oxidized [NADPH--hemoprotein reductase] + 2 H2O + H(+). The enzyme catalyses 32-oxo-24,25-dihydrolanosterol + reduced [NADPH--hemoprotein reductase] + O2 = 4,4-dimethyl-8,14-cholestadien-3beta-ol + formate + oxidized [NADPH--hemoprotein reductase] + H2O + 2 H(+). The protein operates within steroid biosynthesis; zymosterol biosynthesis; zymosterol from lanosterol: step 1/6. Its activity is regulated as follows. Inhibited by azalanstat. Inhibited by azole antifungal agents ketoconazole, itraconazole and fluconazole. Its function is as follows. Sterol 14alpha-demethylase that plays a critical role in the cholesterol biosynthesis pathway, being cholesterol the major sterol component in mammalian membranes as well as a precursor for bile acid and steroid hormone synthesis. Cytochrome P450 monooxygenase that catalyzes the three-step oxidative removal of the 14alpha-methyl group (C-32) of sterols such as lanosterol (lanosta-8,24-dien-3beta-ol) and 24,25-dihydrolanosterol (DHL) in the form of formate, and converts the sterols to 4,4-dimethyl-5alpha-cholesta-8,14,24-trien-3beta-ol and 4,4-dimethyl-8,14-cholestadien-3beta-ol, respectively, which are intermediates of cholesterol biosynthesis. Can also demethylate substrates not intrinsic to mammals, such as eburicol (24-methylene-24,25-dihydrolanosterol), but at a lower rate than DHL. This chain is Lanosterol 14-alpha demethylase, found in Mus musculus (Mouse).